A 509-amino-acid chain; its full sequence is ATP synthase subunit alpha (509 aa).

Residue 169 to 176 (GDRQTGKT) coordinates ATP.

Belongs to the ATPase alpha/beta chains family. As to quaternary structure, F-type ATPases have 2 components, CF(1) - the catalytic core - and CF(0) - the membrane proton channel. CF(1) has five subunits: alpha(3), beta(3), gamma(1), delta(1), epsilon(1). CF(0) has three main subunits: a(1), b(2) and c(9-12). The alpha and beta chains form an alternating ring which encloses part of the gamma chain. CF(1) is attached to CF(0) by a central stalk formed by the gamma and epsilon chains, while a peripheral stalk is formed by the delta and b chains.

It is found in the cell inner membrane. It carries out the reaction ATP + H2O + 4 H(+)(in) = ADP + phosphate + 5 H(+)(out). Produces ATP from ADP in the presence of a proton gradient across the membrane. The alpha chain is a regulatory subunit. The polypeptide is ATP synthase subunit alpha (Methylobacterium sp. (strain 4-46)).